A 272-amino-acid polypeptide reads, in one-letter code: Phosphate import ATP-binding protein PstB (272 aa).

The 242-residue stretch at 26-267 (VAARNLNFYY…PADRRTQDYI (242 aa)) folds into the ABC transporter domain. Position 58 to 65 (58 to 65 (GPSGCGKS)) interacts with ATP.

It belongs to the ABC transporter superfamily. Phosphate importer (TC 3.A.1.7) family. The complex is composed of two ATP-binding proteins (PstB), two transmembrane proteins (PstC and PstA) and a solute-binding protein (PstS).

It is found in the cell inner membrane. The enzyme catalyses phosphate(out) + ATP + H2O = ADP + 2 phosphate(in) + H(+). Functionally, part of the ABC transporter complex PstSACB involved in phosphate import. Responsible for energy coupling to the transport system. The polypeptide is Phosphate import ATP-binding protein PstB (Nitrobacter hamburgensis (strain DSM 10229 / NCIMB 13809 / X14)).